The following is a 325-amino-acid chain: Tyrosine phosphatase H2 (325 aa).

The Tyrosine-protein phosphatase domain occupies 27 to 295; that stretch reads VTREHEKIMA…FFCYRVMERY (269 aa). The active-site Phosphocysteine intermediate is the Cys236.

Belongs to the protein-tyrosine phosphatase family.

It localises to the host cytoplasm. The enzyme catalyses O-phospho-L-tyrosyl-[protein] + H2O = L-tyrosyl-[protein] + phosphate. Functionally, suppresses host immune cell adhesion and phagocytosis. Triggers host mitochondrial membrane depolarization and caspase-dependent apoptosis. This Microplitis demolitor bracovirus (isolate Webb) (MdBV) protein is Tyrosine phosphatase H2 (H2).